A 157-amino-acid chain; its full sequence is Cyclic pyranopterin monophosphate synthase (157 aa).

Substrate contacts are provided by residues 74-76 (MCH) and 112-113 (ME). Aspartate 127 is a catalytic residue.

Belongs to the MoaC family. In terms of assembly, homohexamer; trimer of dimers.

It carries out the reaction (8S)-3',8-cyclo-7,8-dihydroguanosine 5'-triphosphate = cyclic pyranopterin phosphate + diphosphate. The protein operates within cofactor biosynthesis; molybdopterin biosynthesis. Catalyzes the conversion of (8S)-3',8-cyclo-7,8-dihydroguanosine 5'-triphosphate to cyclic pyranopterin monophosphate (cPMP). In Campylobacter lari (strain RM2100 / D67 / ATCC BAA-1060), this protein is Cyclic pyranopterin monophosphate synthase.